The primary structure comprises 407 residues: Na(+)-translocating NADH-quinone reductase subunit F (407 aa).

The chain crosses the membrane as a helical span at residues 3 to 23 (IILGVAMFTGIVMVLVLLILF). Residues 32 to 126 (GDIAVEVNGD…NLKIELPEEI (95 aa)) form the 2Fe-2S ferredoxin-type domain. Positions 69, 75, 78, and 110 each coordinate [2Fe-2S] cluster. The FAD-binding FR-type domain occupies 129–269 (VKKWECEVIS…SGPFGEFFAK (141 aa)).

Belongs to the NqrF family. In terms of assembly, composed of six subunits; NqrA, NqrB, NqrC, NqrD, NqrE and NqrF. [2Fe-2S] cluster serves as cofactor. FAD is required as a cofactor.

It localises to the cell inner membrane. It catalyses the reaction a ubiquinone + n Na(+)(in) + NADH + H(+) = a ubiquinol + n Na(+)(out) + NAD(+). Its function is as follows. NQR complex catalyzes the reduction of ubiquinone-1 to ubiquinol by two successive reactions, coupled with the transport of Na(+) ions from the cytoplasm to the periplasm. The first step is catalyzed by NqrF, which accepts electrons from NADH and reduces ubiquinone-1 to ubisemiquinone by a one-electron transfer pathway. This Serratia proteamaculans (strain 568) protein is Na(+)-translocating NADH-quinone reductase subunit F.